A 189-amino-acid chain; its full sequence is GMP synthase [glutamine-hydrolyzing] subunit A (189 aa).

In terms of domain architecture, Glutamine amidotransferase type-1 spans 5-189 (KILVVNNYGQ…TNFFEVCDRY (185 aa)). The active-site Nucleophile is Cys-79. Catalysis depends on residues His-166 and Glu-168.

Heterodimer composed of a glutamine amidotransferase subunit (A) and a GMP-binding subunit (B).

The catalysed reaction is XMP + L-glutamine + ATP + H2O = GMP + L-glutamate + AMP + diphosphate + 2 H(+). The protein operates within purine metabolism; GMP biosynthesis; GMP from XMP (L-Gln route): step 1/1. Functionally, catalyzes the synthesis of GMP from XMP. This chain is GMP synthase [glutamine-hydrolyzing] subunit A, found in Methanosarcina acetivorans (strain ATCC 35395 / DSM 2834 / JCM 12185 / C2A).